Here is a 421-residue protein sequence, read N- to C-terminus: Tyrosine-protein phosphatase non-receptor type 20 (421 aa).

The disordered stretch occupies residues methionine 1–histidine 58. Positions leucine 27–threonine 41 are enriched in low complexity. The segment covering lysine 48 to histidine 58 has biased composition (polar residues). Serine 76 carries the phosphoserine modification. Residues arginine 93 to serine 116 are disordered. The segment covering proline 104–serine 116 has biased composition (polar residues). Serine 122 is modified (phosphoserine). Positions isoleucine 160–valine 413 constitute a Tyrosine-protein phosphatase domain. Substrate contacts are provided by residues aspartate 324, cysteine 354 to arginine 360, and glutamine 398. Cysteine 354 functions as the Phosphocysteine intermediate in the catalytic mechanism.

This sequence belongs to the protein-tyrosine phosphatase family. Non-receptor class subfamily.

The protein localises to the nucleus. The protein resides in the cytoplasm. It localises to the cytoskeleton. It is found in the microtubule organizing center. Its subcellular location is the centrosome. The enzyme catalyses O-phospho-L-tyrosyl-[protein] + H2O = L-tyrosyl-[protein] + phosphate. In terms of biological role, tyrosine-protein phosphatase targeted to sites of actin polymerization in response of varied extracellular stimuli. Has tyrosine phosphatase activity towards various tyrosyl phosphorylated substrates. The sequence is that of Tyrosine-protein phosphatase non-receptor type 20 (Ptpn20) from Rattus norvegicus (Rat).